The chain runs to 964 residues: Protein HIRA (964 aa).

6 WD repeats span residues 10–50, 64–103, 123–162, 165–204, 259–331, and 335–376; these read RHEG…KDNT, DHFG…GTSE, GHTA…CTAV, GHTS…LAHK, GHNA…PLFV, and FFSQ…HRLS. The segment at 453–490 is disordered; it reads SHEDSKKTAGPTADDVKKGNQLSSPVKQREYRRPDGRK. Residues 479-490 show a composition bias toward basic and acidic residues; sequence KQREYRRPDGRK. One copy of the WD 7 repeat lies at 644–685; that stretch reads LWSDRISGKVTVLAGNANFWAVGCEDGFLQVYTRCGVRAMPA. Residues 920-940 adopt a coiled-coil conformation; that stretch reads ASNRKVQRLLNEFMDLLLEYE.

Belongs to the WD repeat HIR1 family. Interacts with RS2. In terms of tissue distribution, more abundant in apices and young leaf primordia than in fully expanded leaf tissues.

Its subcellular location is the nucleus. Its function is as follows. Histone chaperone involved in maintining knox genes silencing throughout leaf development. In Zea mays (Maize), this protein is Protein HIRA.